Here is a 222-residue protein sequence, read N- to C-terminus: MVIHAIVPVKELHRAKQRLARVLDAHERRALSLAMLNDVLVALSYSPVSRIIVIGRDVETGHTARAHGAAFVIDQSAALNDALHQAAADIPDHAAALVAPSDLPLLGAEDVIALTCISGDKPGVAIAPAHDGGTNLLLVSPVVGWTFLFGPDSLTHHIAAARQRHLPVHLLRLPHLERDIDDIDDLIWLAQQPGDTSAQRLARMFLERKGAQLWQSSDMPPH.

Residues threonine 134, glycine 150, and serine 153 each coordinate phosphoenolpyruvate.

It belongs to the CofC family.

It catalyses the reaction phosphoenolpyruvate + GTP + H(+) = enolpyruvoyl-2-diphospho-5'-guanosine + diphosphate. Its pathway is cofactor biosynthesis; coenzyme F420 biosynthesis. Guanylyltransferase that catalyzes the activation of phosphoenolpyruvate (PEP) as enolpyruvoyl-2-diphospho-5'-guanosine, via the condensation of PEP with GTP. It is involved in the biosynthesis of coenzyme F420, a hydride carrier cofactor. The sequence is that of Phosphoenolpyruvate guanylyltransferase from Roseiflexus sp. (strain RS-1).